The primary structure comprises 205 residues: Small ribosomal subunit protein uS4 (205 aa).

The segment at 1–46 is disordered; sequence MSKRHSAKYKIDRRMGENLWGRPKSPVNSRSYGPGQHGQRRKSKVS. The 61-residue stretch at 94-154 folds into the S4 RNA-binding domain; it reads SRLDAIVYRA…EKSRNMALVL (61 aa).

This sequence belongs to the universal ribosomal protein uS4 family. Part of the 30S ribosomal subunit. Contacts protein S5. The interaction surface between S4 and S5 is involved in control of translational fidelity.

In terms of biological role, one of the primary rRNA binding proteins, it binds directly to 16S rRNA where it nucleates assembly of the body of the 30S subunit. Functionally, with S5 and S12 plays an important role in translational accuracy. This Caulobacter vibrioides (strain ATCC 19089 / CIP 103742 / CB 15) (Caulobacter crescentus) protein is Small ribosomal subunit protein uS4.